Reading from the N-terminus, the 512-residue chain is Podocan-like protein 1 (512 aa).

The N-terminal stretch at 1-26 is a signal peptide; that stretch reads MAESGLAMWPSLLLLLLLPGPPPVAG. In terms of domain architecture, LRRNT spans 37–74; the sequence is ESLQPLPRACPLRCSCPRVDTVDCDGLDLRVFPDNITR. N71 carries N-linked (GlcNAc...) asparagine glycosylation. LRR repeat units lie at residues 75-96, 99-119, 125-146, 147-167, 170-193, 196-216, 217-238, 241-261, 267-288, 289-309, 312-332, 338-359, 360-380, 383-396, 409-430, 431-451, and 454-474; these read AAQH…ELSR, GLRT…PDEA, QLQH…LPRS, LRVA…TFGE, ALRS…AFRG, AIAT…SLPP, SLER…ALSR, QLRE…DATT, SLEY…LPRT, LAIL…RLHG, GLRY…PAGA, GLHT…LPRR, LRAL…DLVA, GLTE…RLAS, ALRS…LPTG, LRTL…PLAG, and QLRE…GPGT.

Belongs to the small leucine-rich proteoglycan (SLRP) family. SLRP class V subfamily. In terms of processing, N-glycosylated.

It localises to the secreted. It is found in the extracellular space. The protein localises to the extracellular matrix. This is Podocan-like protein 1 (PODNL1) from Homo sapiens (Human).